A 155-amino-acid polypeptide reads, in one-letter code: Ribosome maturation factor RimP (155 aa).

The protein belongs to the RimP family.

It is found in the cytoplasm. Its function is as follows. Required for maturation of 30S ribosomal subunits. This chain is Ribosome maturation factor RimP, found in Hamiltonella defensa subsp. Acyrthosiphon pisum (strain 5AT).